The sequence spans 1635 residues: U3 small nucleolar RNA-associated protein 10 (1635 aa).

The disordered stretch occupies residues 781–803; it reads TTSMDAPSDESTKRRRRSSSSTV. A run of 2 helical transmembrane segments spans residues 1141–1161 and 1288–1308; these read PELL…TVAG and IALS…SFMV.

It belongs to the HEATR1/UTP10 family. In terms of assembly, component of the ribosomal small subunit (SSU) processome.

Its subcellular location is the nucleus. It is found in the nucleolus. The protein localises to the membrane. Involved in nucleolar processing of pre-18S ribosomal RNA. Involved in ribosome biosynthesis. This is U3 small nucleolar RNA-associated protein 10 from Yarrowia lipolytica (strain CLIB 122 / E 150) (Yeast).